The sequence spans 255 residues: tRNA uridine(34) hydroxylase (255 aa).

The region spanning alanine 125–serine 219 is the Rhodanese domain. Cysteine 179 (cysteine persulfide intermediate) is an active-site residue.

This sequence belongs to the TrhO family.

It carries out the reaction uridine(34) in tRNA + AH2 + O2 = 5-hydroxyuridine(34) in tRNA + A + H2O. In terms of biological role, catalyzes oxygen-dependent 5-hydroxyuridine (ho5U) modification at position 34 in tRNAs. This chain is tRNA uridine(34) hydroxylase, found in Nitrobacter winogradskyi (strain ATCC 25391 / DSM 10237 / CIP 104748 / NCIMB 11846 / Nb-255).